We begin with the raw amino-acid sequence, 218 residues long: Flagellin B1 (218 aa).

A propeptide spanning residues Met1–Gly12 is cleaved from the precursor. N-linked (GlcNAc...) asparagine glycosylation is found at Asn38, Asn71, Asn77, Asn115, and Asn136.

It belongs to the archaeal flagellin family. In terms of processing, N-linked glycans consist of the 779 Da trisaccharide beta-ManNAc(Thr)-(1-4)-beta-GlcNAc3NAcA-(1-3)-beta-GlcNAc.

It is found in the archaeal flagellum. In terms of biological role, flagellin is the subunit protein which polymerizes to form the filaments of archaeal flagella. The polypeptide is Flagellin B1 (flaB1) (Methanococcus voltae).